The following is a 60-amino-acid chain: Large ribosomal subunit protein bL32 (60 aa).

Residues 1-16 (MAVPRRKTSPSRRGMR) show a composition bias toward basic residues. The disordered stretch occupies residues 1-60 (MAVPRRKTSPSRRGMRRSADAIKKPTYAEDKDSGELRRPHHLDLKTGMYKGRQVLIKKES). Residues 17–44 (RSADAIKKPTYAEDKDSGELRRPHHLDL) are compositionally biased toward basic and acidic residues.

The protein belongs to the bacterial ribosomal protein bL32 family.

The chain is Large ribosomal subunit protein bL32 from Rhodopseudomonas palustris (strain BisA53).